The sequence spans 59 residues: Large ribosomal subunit protein eL37 (59 aa).

Zn(2+) is bound by residues Cys20, Cys23, Cys35, and Cys38. A C4-type zinc finger spans residues 20–38 (CRRCGRHSFHRRKGYCAAC).

The protein belongs to the eukaryotic ribosomal protein eL37 family. The cofactor is Zn(2+).

Its function is as follows. Binds to the 23S rRNA. This is Large ribosomal subunit protein eL37 (rpl37e) from Archaeoglobus fulgidus (strain ATCC 49558 / DSM 4304 / JCM 9628 / NBRC 100126 / VC-16).